We begin with the raw amino-acid sequence, 630 residues long: tRNA uridine 5-carboxymethylaminomethyl modification enzyme MnmG (630 aa).

FAD contacts are provided by residues 13–18, Val-125, and Ser-180; that span reads GGGHAG. 273 to 287 is an NAD(+) binding site; the sequence is GPRYCPSIEDKIHRF. Gln-370 serves as a coordination point for FAD.

The protein belongs to the MnmG family. In terms of assembly, homodimer. Heterotetramer of two MnmE and two MnmG subunits. Requires FAD as cofactor.

It is found in the cytoplasm. In terms of biological role, NAD-binding protein involved in the addition of a carboxymethylaminomethyl (cmnm) group at the wobble position (U34) of certain tRNAs, forming tRNA-cmnm(5)s(2)U34. This is tRNA uridine 5-carboxymethylaminomethyl modification enzyme MnmG from Shewanella woodyi (strain ATCC 51908 / MS32).